Consider the following 391-residue polypeptide: MISGAQQYRDKFAVRALVAHNDVAVMIEQCFLVSPQYVCMICEEVARNLKYKLVLMDKNNIQVLSGMKDACVLSALDAVDMVVSTMAGIARLQPIFSAIRVGKKILLANKETLVLSGQLFMTEVYKYNASVLPLDSEYNAIFQNLSVIYQKKLGQVSLSQYGICCIVLTDSGGVLYKITRTKLFKITPVQVYIHPNWSMGLKISVNSATVMNRVLEYIEAHHLFNVSSNEIEILLHTQTIIYATIRYSDGSVLAHFSTPDMKIFIAYAMAYLNKIKLNNISTYSKQYEIYNTYCGNNTLNLDILDTKNYPCLQTAIDASNHSQDSVIVLNADNEVTVEAFLCEMIAFIKIPNFIYRIMNTLNHFQEPSTIDDIIYIDHCIKETEIRYAIGN.

An NADPH-binding site is contributed by Asn-109. Lys-110 provides a ligand contact to 1-deoxy-D-xylulose 5-phosphate. NADPH is bound at residue Glu-111. Asp-135 is a binding site for Mn(2+). Ser-136, Glu-137, Ser-171, and His-194 together coordinate 1-deoxy-D-xylulose 5-phosphate. Glu-137 serves as a coordination point for Mn(2+). Residue Gly-200 participates in NADPH binding. Positions 207, 212, 213, and 216 each coordinate 1-deoxy-D-xylulose 5-phosphate. Glu-216 lines the Mn(2+) pocket.

It belongs to the DXR family. Homodimer. Requires Mg(2+) as cofactor. It depends on Mn(2+) as a cofactor.

The catalysed reaction is 2-C-methyl-D-erythritol 4-phosphate + NADP(+) = 1-deoxy-D-xylulose 5-phosphate + NADPH + H(+). The protein operates within isoprenoid biosynthesis; isopentenyl diphosphate biosynthesis via DXP pathway; isopentenyl diphosphate from 1-deoxy-D-xylulose 5-phosphate: step 1/6. Catalyzes the NADPH-dependent rearrangement and reduction of 1-deoxy-D-xylulose-5-phosphate (DXP) to 2-C-methyl-D-erythritol 4-phosphate (MEP). This Blochmanniella floridana protein is 1-deoxy-D-xylulose 5-phosphate reductoisomerase.